Reading from the N-terminus, the 318-residue chain is NADH-ubiquinone oxidoreductase chain 1 (318 aa).

The next 8 membrane-spanning stretches (helical) occupy residues 2-22, 71-91, 98-118, 146-166, 171-191, 222-242, 253-273, and 294-314; these read FMVN…FLTL, YIIA…PLPI, INLG…SILW, LAII…STLI, HTWL…STLA, LFFM…ATIF, EFFS…FLWV, and LPLT…LANI.

The protein belongs to the complex I subunit 1 family.

The protein localises to the mitochondrion inner membrane. It carries out the reaction a ubiquinone + NADH + 5 H(+)(in) = a ubiquinol + NAD(+) + 4 H(+)(out). Core subunit of the mitochondrial membrane respiratory chain NADH dehydrogenase (Complex I) that is believed to belong to the minimal assembly required for catalysis. Complex I functions in the transfer of electrons from NADH to the respiratory chain. The immediate electron acceptor for the enzyme is believed to be ubiquinone. In Nycticebus coucang (Slow loris), this protein is NADH-ubiquinone oxidoreductase chain 1 (MT-ND1).